The sequence spans 160 residues: MGVFNYETEATSVIPAARLFKAFILDGDNLFPKVAPQAISSVENIEGNGGPGTIKKISFPEGIPFKYVKGRVDEVDHTNFKYSYSVIEGGPVGDTLEKISNEIKIVATPNGGSILKINNKYHTKGDHEVKAEQIKASKEMGETLLRAVESYLLAHSDAYN.

4 residues coordinate brassinolide: lysine 55, tyrosine 82, tyrosine 84, and asparagine 101.

This sequence belongs to the BetVI family.

Its subcellular location is the cytoplasm. May be a general steroid carrier protein. The polypeptide is Major pollen allergen Bet v 1-E (BETV1E) (Betula pendula (European white birch)).